Here is a 1366-residue protein sequence, read N- to C-terminus: MSEVVEKADENVVPLFSRPELYPVPSESVLTVDLRDGTVRILKCTLPALLVQLSSPLDKVDYSMLTDFFLVYRNFMSSQKLLDLIQERFQWAIDLRQSDPSSQEKITSEVILVRMFVLVRHWLSNYFAQDFVVDTSLRRQFLQFINGYSPVDRFLDNIIISLKKLWVQNVQIMWEDLENLIVENNVVSRDDWLKWEIEDVPSGSSSETGEGSTKGKRLSFIALQNINNPVLRNESLLSLLHTREKIPLPQQSEDESKKQSTRIKQRTGSMLLFPENASNGLSINEKLTASGVSPEATPKQEREITDPKNSKDNKHILPQLSRVTNVSYMMKDLEYPSTPSVDIFVPPTPAKNIEFILQTSYMETDLPEQSNGSDSTNTVNGNNTNHKGILGLLSKWKLNHQRKPTVNPVQNPPRVENLIKYVFSISSLDNHANPLPDSLSSMFDILSARTIDEVEYLVSVESDLLAKLEAKKLTTEISKLETNEDESQDYSVIDNLNLYKTVSSIANSVISLSKTLNVRTNKSTTHLLSPSTSALERKNIRNSAPMLYSYNNSRYSITNALMGLPNTNDNSSPKRLVFHDPTRNSPTKKAILANNLNNIGEYNGERDSITSIVTYDSAFSDISSSGNILSQHKGSSNIFMESAPTLKRKLNVNDLRRFNFEKSDSTDDRSCSPQNREATETSATSMESDANDNAIQDEYENENEDIASLITAYEESTSEIDTQCQNNAQIRRPTSGRISITRNYSVASPNSLRSILPKSPLILGNEVFIERDKALAANQDIISELEETTSLLLNDNDRKFTVSRGSVCNDSDSQSISTNLLFSSAQASPQKLVIKEVDVIQEKSEHPDVPTPVLCKQPISKLSETPSIKSIGSRDSEESFDLTSIASKPNRAQSTTLREKYHLEKQATNDIFEEDVENLNPENNKYLFSPDTDSIDFASPEKNLDDLKQQFIDQSTDEQTSLDEEEIATQDNENKDHGIDKKKLEDIMNGIDDTADTSMDPVNLALMKLEGTYDKGEKEIDDKSPSINSELAREVENFQIVQTAALPESARKRQSMFIQRRRNTMIDFSVRDSLIDKDSSCTRLENTDEQIRNLLNQYTLTDSRLKIDNLEQHIPFILMYDSKSVANQLTLIEKEILSEVDWKDLLDLTMSEQLPQFTSWLQLLVQNENLSGIDLAIARFNLTVDWIISEIVMTQDIRLRRNTIQRFIHIAEHCKELQNYNTLMEIILALNSIVVQKFTETWRLVEPGDLLTWETLKAIPSLEKNYSNIRQLIDEVEPLSGCIPFIVVYLSDLSLNIEKRTWIVHDEVLNYNKFQTNVQIVKNFVQKMQWSKFYNIDIDHELLSKCVYITSLSHDEINSISHKSPI.

The region spanning 37–170 (GTVRILKCTL…SLKKLWVQNV (134 aa)) is the N-terminal Ras-GEF domain. Disordered stretches follow at residues 290-314 (SGVS…KDNK), 661-690 (EKSD…ESDA), and 955-979 (STDE…DHGI). 2 stretches are compositionally biased toward basic and acidic residues: residues 298–314 (PKQE…KDNK) and 661–670 (EKSDSTDDRS). Positions 671 to 690 (CSPQNREATETSATSMESDA) are enriched in polar residues. The Ras-GEF domain maps to 1121 to 1361 (DSKSVANQLT…LSHDEINSIS (241 aa)).

This sequence belongs to the LTE1 family.

Its subcellular location is the cytoplasm. It localises to the bud. Functionally, GDP-GTP exchange factor component of the mitotic exit network (MEN). Fine-tunes the timing of the mitotic exit and couples this event with cytokinesis. May also be involved in proprotein-processing in the secretory pathway. In Kluyveromyces lactis (strain ATCC 8585 / CBS 2359 / DSM 70799 / NBRC 1267 / NRRL Y-1140 / WM37) (Yeast), this protein is Guanine nucleotide exchange factor LTE1 (LTE1).